A 502-amino-acid chain; its full sequence is Probable glycine dehydrogenase (decarboxylating) subunit 2 (502 aa).

Lys273 is modified (N6-(pyridoxal phosphate)lysine).

The protein belongs to the GcvP family. C-terminal subunit subfamily. As to quaternary structure, the glycine cleavage system is composed of four proteins: P, T, L and H. In this organism, the P 'protein' is a heterodimer of two subunits. Requires pyridoxal 5'-phosphate as cofactor.

The catalysed reaction is N(6)-[(R)-lipoyl]-L-lysyl-[glycine-cleavage complex H protein] + glycine + H(+) = N(6)-[(R)-S(8)-aminomethyldihydrolipoyl]-L-lysyl-[glycine-cleavage complex H protein] + CO2. Functionally, the glycine cleavage system catalyzes the degradation of glycine. The P protein binds the alpha-amino group of glycine through its pyridoxal phosphate cofactor; CO(2) is released and the remaining methylamine moiety is then transferred to the lipoamide cofactor of the H protein. The chain is Probable glycine dehydrogenase (decarboxylating) subunit 2 from Pyrococcus abyssi (strain GE5 / Orsay).